Reading from the N-terminus, the 48-residue chain is 4-carboxymuconolactone decarboxylase (48 aa).

The protein belongs to the carboxymuconolactone decarboxylase family.

The catalysed reaction is (R)-2-(carboxymethyl)-5-oxo-2,5-dihydro-2-furoate + H(+) = (4,5-dihydro-5-oxofuran-2-yl)-acetate + CO2. The protein operates within aromatic compound metabolism; beta-ketoadipate pathway; 5-oxo-4,5-dihydro-2-furylacetate from 3-carboxy-cis,cis-muconate: step 2/2. The protein is 4-carboxymuconolactone decarboxylase of Pseudomonas putida (Arthrobacter siderocapsulatus).